The following is a 135-amino-acid chain: Hemoglobin subunit beta-3 (135 aa).

In terms of domain architecture, Globin spans 2–135 (HWTAEEKALV…VVDALSKAYQ (134 aa)). Heme b-binding residues include His57 and His81.

It belongs to the globin family. Hb 3 is a heterotetramer of two alpha and two beta-3 chains. As to expression, red blood cells (at protein level).

In terms of biological role, involved in oxygen transport from gills to the various peripheral tissues. The chain is Hemoglobin subunit beta-3 from Somniosus microcephalus (Greenland sleeper shark).